Consider the following 377-residue polypeptide: Phospho-N-acetylmuramoyl-pentapeptide-transferase (377 aa).

Transmembrane regions (helical) follow at residues 9–29, 59–79, 85–105, 122–142, 155–175, 178–198, 210–230, 247–267, 274–294, 299–319, and 354–374; these read YITLRAVLACATALLIGLVAG, TPTMGGALILIAIAISTLLWA, FVWVVLLVTFGFGWIGWMDDY, FFWQATIGLVAAVYLAFAVSA, WVGSGFTMPLPTRADLIVPFF, VSYPLGVLGFVALTWAVIVGT, GLAIMPTVMVGSALGIFAYVV, AAELMVLCAAIGGAGLAFLWF, VFMGDVGALALGGALGTIAVI, IVLFIMGGVFVVETLSVMVQV, and QVVVRFWIITMMLVLVGLSTL.

This sequence belongs to the glycosyltransferase 4 family. MraY subfamily. It depends on Mg(2+) as a cofactor.

It localises to the cell inner membrane. The enzyme catalyses UDP-N-acetyl-alpha-D-muramoyl-L-alanyl-gamma-D-glutamyl-meso-2,6-diaminopimeloyl-D-alanyl-D-alanine + di-trans,octa-cis-undecaprenyl phosphate = di-trans,octa-cis-undecaprenyl diphospho-N-acetyl-alpha-D-muramoyl-L-alanyl-D-glutamyl-meso-2,6-diaminopimeloyl-D-alanyl-D-alanine + UMP. It participates in cell wall biogenesis; peptidoglycan biosynthesis. Catalyzes the initial step of the lipid cycle reactions in the biosynthesis of the cell wall peptidoglycan: transfers peptidoglycan precursor phospho-MurNAc-pentapeptide from UDP-MurNAc-pentapeptide onto the lipid carrier undecaprenyl phosphate, yielding undecaprenyl-pyrophosphoryl-MurNAc-pentapeptide, known as lipid I. This is Phospho-N-acetylmuramoyl-pentapeptide-transferase from Bordetella bronchiseptica (strain ATCC BAA-588 / NCTC 13252 / RB50) (Alcaligenes bronchisepticus).